Here is a 376-residue protein sequence, read N- to C-terminus: Chaperone protein DnaJ (376 aa).

The J domain maps to 5–72 (DFYEVLGVPK…QKRAAYDQYG (68 aa)). The CR-type zinc-finger motif lies at 136-214 (GKEAQIRIPS…CHGQGRVKKQ (79 aa)). The Zn(2+) site is built by C149, C152, C166, C169, C188, C191, C202, and C205. CXXCXGXG motif repeat units follow at residues 149-156 (CETCHGSG), 166-173 (CGTCQGSG), 188-195 (CPHCRGTG), and 202-209 (CTACHGQG). Disordered stretches follow at residues 227 to 246 (DGMR…GGPP) and 354 to 376 (KKGG…SFFS). Residues 237-246 (GEPGTNGGPP) are compositionally biased toward gly residues. Basic and acidic residues predominate over residues 367 to 376 (WTDRLKSFFS).

Belongs to the DnaJ family. As to quaternary structure, homodimer. Zn(2+) serves as cofactor.

The protein resides in the cytoplasm. Its function is as follows. Participates actively in the response to hyperosmotic and heat shock by preventing the aggregation of stress-denatured proteins and by disaggregating proteins, also in an autonomous, DnaK-independent fashion. Unfolded proteins bind initially to DnaJ; upon interaction with the DnaJ-bound protein, DnaK hydrolyzes its bound ATP, resulting in the formation of a stable complex. GrpE releases ADP from DnaK; ATP binding to DnaK triggers the release of the substrate protein, thus completing the reaction cycle. Several rounds of ATP-dependent interactions between DnaJ, DnaK and GrpE are required for fully efficient folding. Also involved, together with DnaK and GrpE, in the DNA replication of plasmids through activation of initiation proteins. In Acidovorax ebreus (strain TPSY) (Diaphorobacter sp. (strain TPSY)), this protein is Chaperone protein DnaJ.